We begin with the raw amino-acid sequence, 79 residues long: Acyl carrier protein (79 aa).

Positions 3-78 constitute a Carrier domain; sequence QEILEKVRSI…DAVSYIQEKK (76 aa). Ser38 is modified (O-(pantetheine 4'-phosphoryl)serine).

This sequence belongs to the acyl carrier protein (ACP) family. In terms of processing, 4'-phosphopantetheine is transferred from CoA to a specific serine of apo-ACP by AcpS. This modification is essential for activity because fatty acids are bound in thioester linkage to the sulfhydryl of the prosthetic group.

Its subcellular location is the cytoplasm. Its pathway is lipid metabolism; fatty acid biosynthesis. In terms of biological role, carrier of the growing fatty acid chain in fatty acid biosynthesis. The chain is Acyl carrier protein from Synechococcus sp. (strain RCC307).